The following is a 480-amino-acid chain: Serralysin (480 aa).

Histidine 181 contributes to the Zn(2+) binding site. The active site involves glutamate 182. Zn(2+) is bound by residues histidine 185 and histidine 191. Ca(2+) is bound by residues arginine 260, aspartate 263, aspartate 292, glycine 294, glycine 295, aspartate 297, threonine 334, and glutamate 336. 2 Hemolysin-type calcium-binding repeats span residues 339–356 (IGGS…ANTL) and 357–374 (KGGA…ADNL).

This sequence belongs to the peptidase M10B family. It depends on Zn(2+) as a cofactor. Requires Ca(2+) as cofactor.

It is found in the secreted. The enzyme catalyses Preferential cleavage of bonds with hydrophobic residues in P1'.. The sequence is that of Serralysin (prtA) from Photorhabdus laumondii subsp. laumondii (strain DSM 15139 / CIP 105565 / TT01) (Photorhabdus luminescens subsp. laumondii).